The following is a 980-amino-acid chain: Valine--tRNA ligase (980 aa).

Residues 1 to 40 (MADKGCEAAQSKDSSAPGSGEPRPKTEKELERERQKAAKL) form a disordered region. Residues 22–40 (PRPKTEKELERERQKAAKL) are compositionally biased toward basic and acidic residues. Residues 139–149 (PNVTGALHIGH) carry the 'HIGH' region motif. A 'KMSKS' region motif is present at residues 652–656 (KMSKS). ATP is bound at residue lysine 655.

It belongs to the class-I aminoacyl-tRNA synthetase family.

It localises to the cytoplasm. The enzyme catalyses tRNA(Val) + L-valine + ATP = L-valyl-tRNA(Val) + AMP + diphosphate. This chain is Valine--tRNA ligase (vas2), found in Schizosaccharomyces pombe (strain 972 / ATCC 24843) (Fission yeast).